The sequence spans 494 residues: MQKKYVVALDQGTTSSRAIVFDHDANIVSVSQREFTQLYPNPGWVEHDPMEIWASQSSVLVEALARAGIHSDEVAAIGITNQRETTVIWEKATGKPIYNAIVWQCRRSAEICEQLKAQGLEEYVRENTGLLLDPYFSGTKIKWILDNVPNAREQADRGELLFGTIDTWLVWKLTEGKVHVTDPTNAARTLLFNIHSLTWDNKLLEALDIPLSMLPDVKPSCSVYGTTRIAGEGSEIQVAGMAGDQQAALFGQLCVEPGMAKNTYGTGCFLLMNTGTKAVRSNHGLLTTVAVGPKGEVNYALEGSVFMGGATIQWLRDELGLIRDASDTEYFASKVADTNGVYLVPAFVGLGAPYWDPNARGALFGLTRGANRNHIIRAALESIAYQSKDLLDAMIKDSGVSLKRLKVDGGAVANDFLMQFQADITDVEVLRPSVCETTALGAAFLAGLAVGFWESVIELEHKACIDKHFIPNIDAQTRVQLYAGWQDAVARTRT.

ADP is bound at residue threonine 13. 3 residues coordinate ATP: threonine 13, threonine 14, and serine 15. Threonine 13 serves as a coordination point for sn-glycerol 3-phosphate. Arginine 17 serves as a coordination point for ADP. Sn-glycerol 3-phosphate contacts are provided by arginine 83, glutamate 84, tyrosine 135, and aspartate 244. Glycerol is bound by residues arginine 83, glutamate 84, tyrosine 135, aspartate 244, and glutamine 245. The ADP site is built by threonine 266 and glycine 309. ATP contacts are provided by threonine 266, glycine 309, glutamine 313, and glycine 410. ADP-binding residues include glycine 410 and asparagine 414.

Belongs to the FGGY kinase family.

It catalyses the reaction glycerol + ATP = sn-glycerol 3-phosphate + ADP + H(+). The protein operates within polyol metabolism; glycerol degradation via glycerol kinase pathway; sn-glycerol 3-phosphate from glycerol: step 1/1. Inhibited by fructose 1,6-bisphosphate (FBP). Functionally, key enzyme in the regulation of glycerol uptake and metabolism. Catalyzes the phosphorylation of glycerol to yield sn-glycerol 3-phosphate. The chain is Glycerol kinase from Shewanella putrefaciens (strain CN-32 / ATCC BAA-453).